A 160-amino-acid polypeptide reads, in one-letter code: Cytochrome c-type biogenesis protein CcmE (160 aa).

The Cytoplasmic portion of the chain corresponds to 1–8 (MSAPRKTR). The chain crosses the membrane as a helical; Signal-anchor for type II membrane protein span at residues 9 to 29 (LYAILAVVCGAVLTIALMLYA). The Periplasmic segment spans residues 30 to 160 (LSSNIDLFYT…PAAGPEGKRL (131 aa)). The heme site is built by His-130 and Tyr-134.

Belongs to the CcmE/CycJ family.

The protein localises to the cell inner membrane. Its function is as follows. Heme chaperone required for the biogenesis of c-type cytochromes. Transiently binds heme delivered by CcmC and transfers the heme to apo-cytochromes in a process facilitated by CcmF and CcmH. The protein is Cytochrome c-type biogenesis protein CcmE of Pectobacterium atrosepticum (strain SCRI 1043 / ATCC BAA-672) (Erwinia carotovora subsp. atroseptica).